The following is a 111-amino-acid chain: MSGWYEISQAKDGQYRFVLKAGNGEIILTSELYKAKASAENGIASVQKNSSDDARYERLVAKNDKPYFNLKAANHQVIGTSQFYASEQSRDKGIESVKNNGTTATVKDLTG.

2 repeat units span residues A10 to R58 and A61 to L109. Residues S89–G111 form a disordered region.

This sequence belongs to the UPF0339 family. Duplicated subfamily.

The polypeptide is UPF0339 protein ACIAD0721 (Acinetobacter baylyi (strain ATCC 33305 / BD413 / ADP1)).